The following is a 256-amino-acid chain: Hydroxyethylthiazole kinase (256 aa).

Position 38 (Met38) interacts with substrate. ATP is bound by residues Thr114 and Thr159. Position 186 (Gly186) interacts with substrate.

Belongs to the Thz kinase family. Mg(2+) is required as a cofactor.

The catalysed reaction is 5-(2-hydroxyethyl)-4-methylthiazole + ATP = 4-methyl-5-(2-phosphooxyethyl)-thiazole + ADP + H(+). It functions in the pathway cofactor biosynthesis; thiamine diphosphate biosynthesis; 4-methyl-5-(2-phosphoethyl)-thiazole from 5-(2-hydroxyethyl)-4-methylthiazole: step 1/1. Catalyzes the phosphorylation of the hydroxyl group of 4-methyl-5-beta-hydroxyethylthiazole (THZ). This chain is Hydroxyethylthiazole kinase, found in Streptococcus agalactiae serotype V (strain ATCC BAA-611 / 2603 V/R).